Consider the following 607-residue polypeptide: DNA polymerase (607 aa).

Positions 1–213 (MIELRHEVQG…CSALAPLVPD (213 aa)) constitute a 3'-5' exonuclease domain. Residues 214–607 (VSRPLVPYEH…SWGSLYGADY (394 aa)) form a polymerase region.

This sequence belongs to the DNA polymerase type-A family.

The catalysed reaction is DNA(n) + a 2'-deoxyribonucleoside 5'-triphosphate = DNA(n+1) + diphosphate. Replicates viral genomic DNA. This polymerase possesses two enzymatic activities: DNA synthesis (polymerase) and an exonucleolytic activity that degrades single-stranded DNA in the 3'-5' direction. The polypeptide is DNA polymerase (44) (Mycobacterium phage D29 (Mycobacteriophage D29)).